The following is a 689-amino-acid chain: Methionine--tRNA ligase (689 aa).

The short motif at 19–29 (PYPTGDLHIGH) is the 'HIGH' region element. Zn(2+) contacts are provided by Cys150, Cys153, Cys162, and Cys166. Residues 338–342 (GLSTS) carry the 'KMSKS' region motif. Thr341 contributes to the ATP binding site. Positions 591-689 (EFQALDLRVG…EDSEPGTKVM (99 aa)) constitute a tRNA-binding domain.

Belongs to the class-I aminoacyl-tRNA synthetase family. MetG type 1 subfamily. In terms of assembly, homodimer. It depends on Zn(2+) as a cofactor.

It is found in the cytoplasm. The catalysed reaction is tRNA(Met) + L-methionine + ATP = L-methionyl-tRNA(Met) + AMP + diphosphate. Its function is as follows. Is required not only for elongation of protein synthesis but also for the initiation of all mRNA translation through initiator tRNA(fMet) aminoacylation. The chain is Methionine--tRNA ligase from Halobacterium salinarum (strain ATCC 700922 / JCM 11081 / NRC-1) (Halobacterium halobium).